The sequence spans 297 residues: Oxidoreductase aprR (297 aa).

Belongs to the NmrA-type oxidoreductase family. Isoflavone reductase subfamily.

It functions in the pathway secondary metabolite biosynthesis. Oxidoreductase; part of the gene cluster that mediates the biosynthesis of the asperipin-2a, a bicyclic peptide that possesses two macrocyclic ether rings consisting of 14- and 17-membered paracyclophans. The pathway starts with the processing of the precursor aprA by kexin proteases to produce 11 identical copies of the hexapeptide Phe-Tyr-Tyr-Thr-Gly-Tyr. Macrocyclization of asperipin-2a may accompany an alpha-hydroxylation-dehydration sequence to give an imine, which is readily hydrolyzed to yield putative ketone intermediate. The reductase aprR may be required for the final reduction to yield asperipin-2a. This Aspergillus flavus (strain ATCC 200026 / FGSC A1120 / IAM 13836 / NRRL 3357 / JCM 12722 / SRRC 167) protein is Oxidoreductase aprR.